The chain runs to 207 residues: MNPSRIRVKMCGMTRSEDIQYAIDLGVDAIGLIFYPKSARNVSLEKARIIVNNIPPFVDIVAVLVNPEQSFVQLIINEIPVQLLQFHGEESSEFCRQFNKPFIKAIHPKTAIQIQSAVDEFFDASAILLDTPSDKGRGGTGLTFDWNIIPENLSKPYILAGGLNESNILEAITMCHPYAVDVCSGIEASPGVKDHLKMSRFIKAIWG.

This sequence belongs to the TrpF family.

The enzyme catalyses N-(5-phospho-beta-D-ribosyl)anthranilate = 1-(2-carboxyphenylamino)-1-deoxy-D-ribulose 5-phosphate. It participates in amino-acid biosynthesis; L-tryptophan biosynthesis; L-tryptophan from chorismate: step 3/5. The chain is N-(5'-phosphoribosyl)anthranilate isomerase from Legionella pneumophila (strain Lens).